A 159-amino-acid chain; its full sequence is Transcription elongation factor A protein-like 1 (159 aa).

The tract at residues 1-121 (MDKPRKENEE…QFKGDIHGRN (121 aa)) is disordered. Residues 17-34 (KTDEERPPVEHSPEKQSP) show a composition bias toward basic and acidic residues. Residues 37–54 (QSSEEQSSEEEFFPEELL) show a composition bias toward acidic residues. Composition is skewed to basic and acidic residues over residues 64-80 (SEER…DLFE) and 95-119 (HKLE…DIHG).

Belongs to the TFS-II family. TFA subfamily.

It is found in the nucleus. May be involved in transcriptional regulation. Modulates various viral and cellular promoters in a promoter context-dependent manner. Does not bind DNA directly. The protein is Transcription elongation factor A protein-like 1 of Gorilla gorilla gorilla (Western lowland gorilla).